The primary structure comprises 112 residues: Ribosome-binding factor A (112 aa).

It belongs to the RbfA family. Monomer. Binds 30S ribosomal subunits, but not 50S ribosomal subunits or 70S ribosomes.

The protein localises to the cytoplasm. Functionally, one of several proteins that assist in the late maturation steps of the functional core of the 30S ribosomal subunit. Associates with free 30S ribosomal subunits (but not with 30S subunits that are part of 70S ribosomes or polysomes). Required for efficient processing of 16S rRNA. May interact with the 5'-terminal helix region of 16S rRNA. This is Ribosome-binding factor A from Mycoplasmopsis pulmonis (strain UAB CTIP) (Mycoplasma pulmonis).